A 328-amino-acid chain; its full sequence is Thiamine-monophosphate kinase (328 aa).

Residues D30, T45, T46, and D47 each coordinate Mg(2+). H54 is a binding site for substrate. Mg(2+) contacts are provided by D75 and D122. ATP contacts are provided by residues 121–122 (GD) and R146. D211 serves as a coordination point for Mg(2+). An ATP-binding site is contributed by S213. D214 serves as a coordination point for Mg(2+). E262 and F321 together coordinate substrate.

It belongs to the thiamine-monophosphate kinase family.

The catalysed reaction is thiamine phosphate + ATP = thiamine diphosphate + ADP. It functions in the pathway cofactor biosynthesis; thiamine diphosphate biosynthesis; thiamine diphosphate from thiamine phosphate: step 1/1. Functionally, catalyzes the ATP-dependent phosphorylation of thiamine-monophosphate (TMP) to form thiamine-pyrophosphate (TPP), the active form of vitamin B1. The protein is Thiamine-monophosphate kinase of Haemophilus influenzae (strain ATCC 51907 / DSM 11121 / KW20 / Rd).